The chain runs to 456 residues: RuvB-like helicase 1 (456 aa).

An ATP-binding site is contributed by 70–77 (GPPGTGKT).

Belongs to the RuvB family. In terms of assembly, forms homohexameric rings. May form a dodecamer with rept made of two stacked hexameric rings. Component of the chromatin remodeling Ino80 complex.

It localises to the nucleus. It carries out the reaction ATP + H2O = ADP + phosphate + H(+). Acts as a transcriptional coactivator in Wg signaling. Its function is as follows. Proposed core component of the chromatin remodeling Ino80 complex which is involved in transcriptional regulation, DNA replication and probably DNA repair. The polypeptide is RuvB-like helicase 1 (Aedes aegypti (Yellowfever mosquito)).